Reading from the N-terminus, the 164-residue chain is Protein SprT (164 aa).

Residues 14 to 156 (QQAETFFKRP…LCRRCREILV (143 aa)) form the SprT-like domain. His-69 is a Zn(2+) binding site. The active site involves Glu-70. His-73 lines the Zn(2+) pocket.

Belongs to the SprT family. It depends on Zn(2+) as a cofactor.

Its subcellular location is the cytoplasm. In Pseudomonas entomophila (strain L48), this protein is Protein SprT.